Consider the following 569-residue polypeptide: Adenine deaminase (569 aa).

The protein belongs to the metallo-dependent hydrolases superfamily. Adenine deaminase family. Mn(2+) serves as cofactor.

The catalysed reaction is adenine + H2O + H(+) = hypoxanthine + NH4(+). In Desulfatibacillum aliphaticivorans, this protein is Adenine deaminase.